Consider the following 243-residue polypeptide: 23S rRNA (guanosine-2'-O-)-methyltransferase RlmB (243 aa).

S-adenosyl-L-methionine is bound by residues Gly-196, Ile-216, and Leu-225.

It belongs to the class IV-like SAM-binding methyltransferase superfamily. RNA methyltransferase TrmH family. RlmB subfamily. In terms of assembly, homodimer.

Its subcellular location is the cytoplasm. The enzyme catalyses guanosine(2251) in 23S rRNA + S-adenosyl-L-methionine = 2'-O-methylguanosine(2251) in 23S rRNA + S-adenosyl-L-homocysteine + H(+). Specifically methylates the ribose of guanosine 2251 in 23S rRNA. This is 23S rRNA (guanosine-2'-O-)-methyltransferase RlmB from Salmonella typhi.